The following is a 757-amino-acid chain: Chloride anion exchanger (757 aa).

Residues 1-71 (MIEAIGNQYV…SWLPAYKIKE (71 aa)) are Cytoplasmic-facing. A helical membrane pass occupies residues 72 to 92 (WLLSDIVSGISTGLVAVLQGL). Residue A93 is a topological domain, extracellular. The chain crosses the membrane as a helical span at residues 94–114 (FALLVNIPPAYGLYAAFFPVI). Over 115 to 124 (TYFFLGTSRH) the chain is Cytoplasmic. Residues 125–145 (ISVGPFPVLSMMVGVVVTRVV) form a helical membrane-spanning segment. Residues 146-176 (SDPNASSELSSSSTENDSFIEEKVMVAASVT) lie on the Extracellular side of the membrane. N149 and N161 each carry an N-linked (GlcNAc...) asparagine glycan. The chain crosses the membrane as a helical span at residues 177 to 197 (VLSGIIQLLLGVLQVGFVVIY). The Cytoplasmic segment spans residues 198–201 (LSES). A helical transmembrane segment spans residues 202 to 222 (LISGFTTAAAIHVLVSQLKFM). At 223–250 (LQLPVPAYSDPFSIFKVLESVFTQIQKT) the chain is on the extracellular side. Residues 251–271 (NIADLVTSVIILVVVFVFKEI) form a helical membrane-spanning segment. Over 272–278 (NQRYRSK) the chain is Cytoplasmic. Residues 279-299 (LPVPIPIELIMTVIATGVSYG) traverse the membrane as a helical segment. Residues 300 to 335 (CNFEDRFGVAVVGNMSLGFQPPITPSVEVFQDTIGD) lie on the Extracellular side of the membrane. The helical transmembrane segment at 336–356 (SFGIAIVGFAVAFSVASVYSL) threads the bilayer. The Cytoplasmic segment spans residues 357–367 (KYDYPIDGNQE). Residues 368-388 (LIALGVSNIFTGAFKGFAGST) form a helical membrane-spanning segment. Topologically, residues 389–404 (ALSRSGVQESTGGKTQ) are extracellular. A helical transmembrane segment spans residues 405–425 (VAGLLSAVIVLIVIVAIGFLL). Residues 426–462 (QPLQKSVLAALALGNLKGMLMQFAEIGRLWKKDKYDC) are Cytoplasmic-facing. A helical membrane pass occupies residues 463-483 (LIWIMTFIFAIVLGLGLGLAA). Residues 484–757 (SVAFQLLTIV…ECQVPVETKF (274 aa)) lie on the Extracellular side of the membrane. In terms of domain architecture, STAS spans 518-713 (NYAEVYEPEG…LTIHDAILHI (196 aa)). The PDZ-binding signature appears at 754–757 (ETKF).

This sequence belongs to the SLC26A/SulP transporter (TC 2.A.53) family. As to quaternary structure, interacts with PDZK1. Interacts with CFTR, SLC26A6 and NHERF1. Interacts (via PDZ-binding motif) with NHERF4 (via the third PDZ domain). This interaction leads to decreased expression of SLC26A3 on the cell membrane resulting in its reduced exchanger activity. Post-translationally, N-glycosylation is required for efficient cell surface expression, and protection from proteolytic degradation. Expressed in spermatogenic cells. Expressed at high levels in cecum and colon and at lower levels in small intestine.

It localises to the apical cell membrane. The protein resides in the membrane. Its subcellular location is the cell membrane. The catalysed reaction is hydrogencarbonate(in) + 2 chloride(out) = hydrogencarbonate(out) + 2 chloride(in). In terms of biological role, mediates chloride-bicarbonate exchange with a chloride bicarbonate stoichiometry of 2:1 in the intestinal epithelia. Plays a role in the chloride and bicarbonate homeostasis during sperm epididymal maturation and capacitation. The protein is Chloride anion exchanger (Slc26a3) of Mus musculus (Mouse).